Consider the following 178-residue polypeptide: Protein 105R (178 aa).

An N-terminal signal peptide occupies residues 1-18 (MYFLFFFLLFLFPVGVKG).

This is Protein 105R from Pantherophis guttatus (Corn snake).